The chain runs to 327 residues: Urease accessory protein UreD (327 aa).

The protein belongs to the UreD family. As to quaternary structure, ureD, UreF and UreG form a complex that acts as a GTP-hydrolysis-dependent molecular chaperone, activating the urease apoprotein by helping to assemble the nickel containing metallocenter of UreC. The UreE protein probably delivers the nickel.

Its subcellular location is the cytoplasm. Its function is as follows. Required for maturation of urease via the functional incorporation of the urease nickel metallocenter. The protein is Urease accessory protein UreD of Yersinia enterocolitica serotype O:8 / biotype 1B (strain NCTC 13174 / 8081).